Consider the following 161-residue polypeptide: Allophycocyanin alpha chain (161 aa).

Asparagine 71 bears the N4-methylasparagine mark. Residue cysteine 81 coordinates (2R,3E)-phycocyanobilin.

It belongs to the phycobiliprotein family. As to quaternary structure, heterodimer of an alpha and a beta chain. In terms of processing, contains one covalently linked phycocyanobilin chromophore.

It localises to the cellular thylakoid membrane. Light-harvesting photosynthetic bile pigment-protein from the phycobiliprotein complex. Allophycocyanin has a maximum absorption at approximately 650 nanometers. This Synechocystis sp. (strain ATCC 27184 / PCC 6803 / Kazusa) protein is Allophycocyanin alpha chain (apcA).